A 799-amino-acid chain; its full sequence is Protein phosphatase 1 regulatory subunit 3F (799 aa).

A disordered region spans residues 1-30; sequence MARTAPVEPPLRHPAPPSPAAGEPRASAEA. The Cytoplasmic segment spans residues 1–772; sequence MARTAPVEPP…LTQTLGVLAG (772 aa). The span at 7–19 shows a compositional bias: pro residues; it reads VEPPLRHPAPPSP. Ser18 bears the Phosphoserine mark. The span at 20–30 shows a compositional bias: low complexity; that stretch reads AAGEPRASAEA. A PP1-binding motif motif is present at residues 36-39; the sequence is RVLF. 4 disordered regions span residues 53–108, 201–235, 332–353, and 417–439; these read RYRP…PVPA, SPPG…SPDD, RRRP…LAEH, and ATCG…DRAA. The segment covering 78 to 97 has biased composition (acidic residues); the sequence is ADEEDDGEDGDEGEEEEEAF. The region spanning 127–283 is the CBM21 domain; sequence LERLGRVMVE…NNHGRNYTVL (157 aa). Positions 334 to 353 are enriched in basic and acidic residues; the sequence is RPFEEEPRMRSADDNTLAEH. A Phosphoserine modification is found at Ser545. Disordered regions lie at residues 566–600, 663–688, and 722–743; these read KDTE…PPEI, SKSP…SWVP, and PHVN…KRSP. Positions 569-579 are enriched in acidic residues; sequence EDPDDEGEGED. Over residues 585–594 the composition is skewed to low complexity; that stretch reads PSSPEGGSPK. A phosphoserine mark is found at Ser587 and Ser592. The segment covering 679–688 has biased composition (basic and acidic residues); it reads PTERESSWVP. The chain crosses the membrane as a helical span at residues 773–793; that stretch reads LVMVPVALNSGVSLLVLVLCL. Residues 794-799 are Extracellular-facing; that stretch reads SLAWFS.

In terms of tissue distribution, highly expressed in brain (at protein level).

It localises to the membrane. Its function is as follows. Glycogen-targeting subunit for protein phosphatase 1 (PP1). The chain is Protein phosphatase 1 regulatory subunit 3F (Ppp1r3f) from Mus musculus (Mouse).